Here is a 1640-residue protein sequence, read N- to C-terminus: Basal body protein 10 (1640 aa).

The homodimerization stretch occupies residues 11–64 (VLRRKLEALGYSDPLEPASLQLVQKLVEDLVHTTDSYTAVKQQCAKQAQEIAAF). Residues 93-148 (AERHEREAREHYTAVKRLEDTIAELSYWKHAAAEKLASADKENAGLRKRCEELAKL) are a coiled coil. Residues 154–185 (SGAATPQSVAPKISSRSPIRVAPPPSPPRPRQ) are disordered. The segment covering 174-183 (VAPPPSPPRP) has biased composition (pro residues). Coiled-coil stretches lie at residues 191 to 232 (LQAA…RDVE), 260 to 332 (ILQL…LQDT), 370 to 411 (VERL…AQSR), 461 to 722 (FAAL…AEAD), 758 to 960 (ARQM…AQAA), 1010 to 1030 (GEAL…LVRE), 1059 to 1086 (RASA…LAAE), 1129 to 1282 (INQY…LQAS), 1323 to 1494 (AKDQ…AERD), and 1523 to 1557 (AELA…TRAT). The segment covering 1592 to 1618 (GQGQVQGPAGTAPAAAAGAPGPQPGQA) has biased composition (low complexity). Residues 1592–1640 (GQGQVQGPAGTAPAAAAGAPGPQPGQAQAGGFGGAHGGGSISLSGGPRR) are disordered. Gly residues predominate over residues 1619–1631 (QAGGFGGAHGGGS).

Belongs to the CEP135/TSGA10 family. Homodimer.

It localises to the cytoplasm. The protein resides in the cytoskeleton. The protein localises to the microtubule organizing center. Its subcellular location is the centrosome. It is found in the centriole. Its function is as follows. Microtubule-binding protein essential for cytoskeletal organization (e.g. rootlet microtubule bundles) and flagellar basal body/centriole assembly. This Chlamydomonas reinhardtii (Chlamydomonas smithii) protein is Basal body protein 10.